We begin with the raw amino-acid sequence, 485 residues long: Isocitrate dehydrogenase [NADP], chloroplastic/mitochondrial (485 aa).

The transit peptide at 1-65 directs the protein to the chloroplast and mitochondrion; sequence MLNKLTHGVF…VQFHRASAVR (65 aa). Residues 147-149 and arginine 154 each bind NADP(+); that span reads TIT. Threonine 149 is a binding site for substrate. Substrate is bound by residues 166 to 172, arginine 181, and arginine 204; that span reads SPNGTIR. Residue aspartate 323 coordinates Mn(2+). Lysine 331 provides a ligand contact to NADP(+). A Mn(2+)-binding site is contributed by aspartate 346. NADP(+)-binding positions include 381 to 386 and asparagine 399; that span reads GTVTRH.

This sequence belongs to the isocitrate and isopropylmalate dehydrogenases family. Mg(2+) serves as cofactor. The cofactor is Mn(2+).

It localises to the plastid. Its subcellular location is the chloroplast. The protein resides in the mitochondrion. The enzyme catalyses D-threo-isocitrate + NADP(+) = 2-oxoglutarate + CO2 + NADPH. May be involved in response to oxidative stresses. The chain is Isocitrate dehydrogenase [NADP], chloroplastic/mitochondrial from Arabidopsis thaliana (Mouse-ear cress).